The following is a 166-amino-acid chain: Large ribosomal subunit protein uL10 (166 aa).

This sequence belongs to the universal ribosomal protein uL10 family. As to quaternary structure, part of the ribosomal stalk of the 50S ribosomal subunit. The N-terminus interacts with L11 and the large rRNA to form the base of the stalk. The C-terminus forms an elongated spine to which L12 dimers bind in a sequential fashion forming a multimeric L10(L12)X complex.

Forms part of the ribosomal stalk, playing a central role in the interaction of the ribosome with GTP-bound translation factors. In Neisseria meningitidis serogroup A / serotype 4A (strain DSM 15465 / Z2491), this protein is Large ribosomal subunit protein uL10 (rplJ).